The chain runs to 448 residues: MAKHRYLPMTEQDEKEMLDVIGVKSIDDLFQDIPEKIRFKRDYDLKPAKSEPALLRELSKLASKNANTSEYASFLGAGVYSHYIPTVVDHVISRSEFYTAYTPYQPEISQGELQAIFEFQTMIAELTGMDLANSSMYDGGTALAEAAMLASGHTKRKKILISGAVHPESSNVLKTYATGQHIEVEVIPELDGKTDIEALKKALSDDIAGFVAQYPNFYGQVEPLAELEKLVHENNSLLLVSSNPLSLGLLTPPGEFGADIVVGDSQVFGIPESFGGPHCGFFAVTNKLMRKVPGRLVGETVDENGKRGYVLTLQAREQHIRRDKATSNICSNQALNALASSVAMATLGKTGLVEMAKQNLDKSHYAKQKFREKGFEVLFSDGFFNEFVVKLSKPIKEVNKSLLDEGIIGGYDLGFYEEKYKHHMLVAVTEMRTKEEIDAFVASLEGAK.

Belongs to the GcvP family. N-terminal subunit subfamily. The glycine cleavage system is composed of four proteins: P, T, L and H. In this organism, the P 'protein' is a heterodimer of two subunits.

It catalyses the reaction N(6)-[(R)-lipoyl]-L-lysyl-[glycine-cleavage complex H protein] + glycine + H(+) = N(6)-[(R)-S(8)-aminomethyldihydrolipoyl]-L-lysyl-[glycine-cleavage complex H protein] + CO2. Functionally, the glycine cleavage system catalyzes the degradation of glycine. The P protein binds the alpha-amino group of glycine through its pyridoxal phosphate cofactor; CO(2) is released and the remaining methylamine moiety is then transferred to the lipoamide cofactor of the H protein. The chain is Probable glycine dehydrogenase (decarboxylating) subunit 1 from Listeria monocytogenes serovar 1/2a (strain ATCC BAA-679 / EGD-e).